The chain runs to 317 residues: tRNA(Met) cytidine acetate ligase (317 aa).

ATP contacts are provided by residues 6–19 (IAEY…HIYQ), Gly-100, Asn-157, and Arg-182.

The protein belongs to the TmcAL family.

The protein resides in the cytoplasm. It catalyses the reaction cytidine(34) in elongator tRNA(Met) + acetate + ATP = N(4)-acetylcytidine(34) in elongator tRNA(Met) + AMP + diphosphate. In terms of biological role, catalyzes the formation of N(4)-acetylcytidine (ac(4)C) at the wobble position of elongator tRNA(Met), using acetate and ATP as substrates. First activates an acetate ion to form acetyladenylate (Ac-AMP) and then transfers the acetyl group to tRNA to form ac(4)C34. This is tRNA(Met) cytidine acetate ligase from Mesomycoplasma hyopneumoniae (strain J / ATCC 25934 / NCTC 10110) (Mycoplasma hyopneumoniae).